Reading from the N-terminus, the 318-residue chain is Melanoma-associated antigen 8 (318 aa).

Residues 1-103 form a disordered region; sequence MLLGQKSQRY…GPSTSPDPAH (103 aa). Residues 112–311 form the MAGE domain; sequence LDEKVAELVR…ISYPSLHEEA (200 aa).

In terms of tissue distribution, expressed in many tumors of several types, such as melanoma, head and neck squamous cell carcinoma, lung carcinoma and breast carcinoma, but not in normal tissues except for testis and placenta.

Not known, though may play a role in embryonal development and tumor transformation or aspects of tumor progression. In Homo sapiens (Human), this protein is Melanoma-associated antigen 8 (MAGEA8).